We begin with the raw amino-acid sequence, 149 residues long: Transcriptional repressor NrdR (149 aa).

A zinc finger spans residues 3 to 34; sequence CPFCFAVDTKVIDSRLVGEGSSVRRRRQCLVC. The ATP-cone domain occupies 49–139; the sequence is PRVVKSNDVR…VYRSFEDIRE (91 aa).

The protein belongs to the NrdR family. It depends on Zn(2+) as a cofactor.

In terms of biological role, negatively regulates transcription of bacterial ribonucleotide reductase nrd genes and operons by binding to NrdR-boxes. The protein is Transcriptional repressor NrdR of Cronobacter sakazakii (strain ATCC BAA-894) (Enterobacter sakazakii).